Reading from the N-terminus, the 258-residue chain is Pyridoxal phosphate homeostasis protein (258 aa).

Position 47 is an N6-(pyridoxal phosphate)lysine (K47).

It belongs to the pyridoxal phosphate-binding protein YggS/PROSC family.

Its function is as follows. Pyridoxal 5'-phosphate (PLP)-binding protein, which is involved in PLP homeostasis. In Mycobacterium bovis (strain ATCC BAA-935 / AF2122/97), this protein is Pyridoxal phosphate homeostasis protein.